A 463-amino-acid polypeptide reads, in one-letter code: Probable mannan endo-1,4-beta-mannosidase F (463 aa).

A signal peptide spans 1–18; sequence MRSLSSIALLSVVGAASA. Residues 19–54 form the CBM1 domain; sequence QAGPWAQCGGKSFSGSSECASGWKCQELNEWFSQCV. The interval 57 to 78 is disordered; sequence AESTTPTVSSTPTPTDAPSVSI. Residues 59–77 are compositionally biased toward low complexity; it reads STTPTVSSTPTPTDAPSVS. Positions 75 to 118 are ser-rich linker; it reads SVSITASVTTGINKSISVSSASKSTPLPSSSSASPSPRPTGSGS. Asn87 carries N-linked (GlcNAc...) asparagine glycosylation. Over residues 93-118 the composition is skewed to low complexity; it reads SSASKSTPLPSSSSASPSPRPTGSGS. Residues 93 to 121 form a disordered region; the sequence is SSASKSTPLPSSSSASPSPRPTGSGSFAK. The tract at residues 119-463 is catalytic; that stretch reads FAKADGLQFS…MDHMENVNKN (345 aa). Positions 171 and 285 each coordinate substrate. The active-site Proton donor/acceptor is Glu286. Tyr361 serves as a coordination point for substrate. The Nucleophile role is filled by Glu395. Trp424 provides a ligand contact to substrate.

This sequence belongs to the glycosyl hydrolase 5 (cellulase A) family.

It is found in the secreted. The catalysed reaction is Random hydrolysis of (1-&gt;4)-beta-D-mannosidic linkages in mannans, galactomannans and glucomannans.. Endo-1,4-mannanase, a crucial enzyme for depolymerization of seed galactomannans and wood galactoglucomannans. This Aspergillus oryzae (strain ATCC 42149 / RIB 40) (Yellow koji mold) protein is Probable mannan endo-1,4-beta-mannosidase F (manF).